A 428-amino-acid polypeptide reads, in one-letter code: Phosphoglucosamine mutase (428 aa).

The active-site Phosphoserine intermediate is Ser96. Mg(2+) contacts are provided by Ser96, Asp229, Asp231, and Asp233. Ser96 carries the phosphoserine modification.

It belongs to the phosphohexose mutase family. The cofactor is Mg(2+). In terms of processing, activated by phosphorylation.

It catalyses the reaction alpha-D-glucosamine 1-phosphate = D-glucosamine 6-phosphate. Catalyzes the conversion of glucosamine-6-phosphate to glucosamine-1-phosphate. The polypeptide is Phosphoglucosamine mutase (Thermotoga neapolitana (strain ATCC 49049 / DSM 4359 / NBRC 107923 / NS-E)).